Consider the following 480-residue polypeptide: Glycogen synthase 1 (480 aa).

K15 lines the ADP-alpha-D-glucose pocket.

Belongs to the glycosyltransferase 1 family. Bacterial/plant glycogen synthase subfamily.

It carries out the reaction [(1-&gt;4)-alpha-D-glucosyl](n) + ADP-alpha-D-glucose = [(1-&gt;4)-alpha-D-glucosyl](n+1) + ADP + H(+). It participates in glycan biosynthesis; glycogen biosynthesis. In terms of biological role, synthesizes alpha-1,4-glucan chains using ADP-glucose. This Rhizobium radiobacter (Agrobacterium tumefaciens) protein is Glycogen synthase 1 (glgA1).